The chain runs to 64 residues: Large ribosomal subunit protein bL35 (64 aa).

Residues 1-31 are disordered; it reads MPKMKTHSGAKKRFKLTGTGKLKRQQANRRH.

Belongs to the bacterial ribosomal protein bL35 family.

The protein is Large ribosomal subunit protein bL35 of Paenarthrobacter aurescens (strain TC1).